Reading from the N-terminus, the 335-residue chain is Dihydroorotate dehydrogenase (quinone) (335 aa).

Residues 58-62 and Thr82 each bind FMN; that span reads AGADK. Lys62 is a substrate binding site. 107-111 lines the substrate pocket; it reads NRNGF. FMN contacts are provided by Asn135 and Asn168. Asn168 serves as a coordination point for substrate. Ser171 serves as the catalytic Nucleophile. Substrate is bound at residue Asn173. 2 residues coordinate FMN: Lys213 and Gly241. 242-243 provides a ligand contact to substrate; that stretch reads NT. FMN-binding positions include Gly264, Gly293, and 314–315; that span reads YS.

Belongs to the dihydroorotate dehydrogenase family. Type 2 subfamily. Monomer. It depends on FMN as a cofactor.

The protein resides in the cell membrane. It catalyses the reaction (S)-dihydroorotate + a quinone = orotate + a quinol. The protein operates within pyrimidine metabolism; UMP biosynthesis via de novo pathway; orotate from (S)-dihydroorotate (quinone route): step 1/1. Functionally, catalyzes the conversion of dihydroorotate to orotate with quinone as electron acceptor. This Haemophilus ducreyi (strain 35000HP / ATCC 700724) protein is Dihydroorotate dehydrogenase (quinone).